We begin with the raw amino-acid sequence, 85 residues long: RNA-binding protein Hfq (85 aa).

The region spanning 9–68 (DPFLNELRKEKVPVSVFLVNGIKLHGIIDSFDQYVVMLKNSITQMVYKHAISTVVPSRMV) is the Sm domain.

The protein belongs to the Hfq family. Homohexamer.

Functionally, RNA chaperone that binds small regulatory RNA (sRNAs) and mRNAs to facilitate mRNA translational regulation in response to envelope stress, environmental stress and changes in metabolite concentrations. Also binds with high specificity to tRNAs. This Legionella pneumophila (strain Paris) protein is RNA-binding protein Hfq.